We begin with the raw amino-acid sequence, 105 residues long: Sec-independent protein translocase protein TatA (105 aa).

The chain crosses the membrane as a helical span at residues 1–21 (MSLGPWEIGIIVLLIIVLFGA). The span at 41–50 (EVKEMNKDGD) shows a compositional bias: basic and acidic residues. Residues 41–105 (EVKEMNKDGD…QNYEDPNRTS (65 aa)) form a disordered region. The span at 52-92 (PEQQQQPQQQIAPNQIEAPQPNFEQHYQGQQVQQPQNPQTP) shows a compositional bias: low complexity. Basic and acidic residues predominate over residues 96–105 (QNYEDPNRTS).

The protein belongs to the TatA/E family. As to quaternary structure, the Tat system comprises two distinct complexes: a TatABC complex, containing multiple copies of TatA, TatB and TatC subunits, and a separate TatA complex, containing only TatA subunits. Substrates initially bind to the TatABC complex, which probably triggers association of the separate TatA complex to form the active translocon.

The protein resides in the cell membrane. In terms of biological role, part of the twin-arginine translocation (Tat) system that transports large folded proteins containing a characteristic twin-arginine motif in their signal peptide across membranes. TatA could form the protein-conducting channel of the Tat system. The protein is Sec-independent protein translocase protein TatA of Corynebacterium glutamicum (strain ATCC 13032 / DSM 20300 / JCM 1318 / BCRC 11384 / CCUG 27702 / LMG 3730 / NBRC 12168 / NCIMB 10025 / NRRL B-2784 / 534).